We begin with the raw amino-acid sequence, 152 residues long: Putative pseudoazurin (152 aa).

An N-terminal signal peptide occupies residues 1–23 (MPLKFGLIVATAALIASAASLMA). Residues 28-116 (VQMLNKGTDG…MGMVALIQVG (89 aa)) form the Plastocyanin-like domain. Residues histidine 63, cysteine 101, histidine 104, and methionine 109 each coordinate Cu cation.

Requires Cu cation as cofactor.

The protein resides in the periplasm. In terms of biological role, this soluble electron transfer copper protein is required for the inactivation of copper-containing nitrite reductase in the presence of oxygen. The sequence is that of Putative pseudoazurin (azu) from Rhizobium leguminosarum bv. viciae.